The primary structure comprises 646 residues: Pentatricopeptide repeat-containing protein At5g48910 (646 aa).

A disordered region spans residues 1–24 (MNPTQTLFSPGGNSPASSPASHPS). The span at 9–24 (SPGGNSPASSPASHPS) shows a compositional bias: low complexity. PPR repeat units lie at residues 54–88 (DTLA…MPQR), 89–126 (NCFS…FVEP), 127–161 (NRFT…GFGG), 162–197 (DEFV…DMVV), 207–237 (EIVL…MRQR), 238–272 (SVVS…DIRP), 273–307 (NYVT…GIRI), 308–338 (DDVL…LPRE), 339–373 (NVIT…GVRP), 374–409 (SDVA…GLEP), and 410–440 (RIEH…MPIK). Residues 445–520 (IWKALLGACR…DPGCSLIDID (76 aa)) form a type E motif region. Residues 521–551 (GVLHEFVVEDDSHPKAKEINSMLVEISDKLR) are type E(+) motif. The interval 552–646 (LAGYRPITTQ…DGSCSCMDYW (95 aa)) is type DYW motif.

Belongs to the PPR family. PCMP-H subfamily.

The protein is Pentatricopeptide repeat-containing protein At5g48910 (PCMP-H38) of Arabidopsis thaliana (Mouse-ear cress).